Here is a 64-residue protein sequence, read N- to C-terminus: Bacteriocin glycocin F (64 aa).

The signal sequence occupies residues 1 to 21 (MSKLVKTLTISEISKAQNNGG). 2 disulfides stabilise this stretch: cysteine 26–cysteine 49 and cysteine 33–cysteine 42. A glycan (O-linked (GlcNAc) serine) is linked at serine 39. Cysteine 64 is a glycosylation site (S-linked (GlcNAc) cysteine).

The protein resides in the secreted. Functionally, has antibacterial activity against L.plantarum ATCC 8014. In purified form, the activity is bacteriostatic (IC(50)=2 nM) rather than bactericidal. This chain is Bacteriocin glycocin F, found in Lactiplantibacillus plantarum (Lactobacillus plantarum).